A 165-amino-acid polypeptide reads, in one-letter code: Short form salivary protein D7R1 (165 aa).

The signal sequence occupies residues 1 to 21 (MFNKLHLVSLLACGLFVIAQA). 3 disulfide bridges follow: Cys-27-Cys-59, Cys-40-Cys-164, and Cys-98-Cys-117. Serotonin is bound by residues Glu-28, His-56, Tyr-115, Asp-132, and Glu-135. Residues Tyr-115, Asp-132, and Glu-135 each coordinate histamine.

This sequence belongs to the PBP/GOBP family. Female salivary gland. Not detected in female carcass without salivary glands. Not detected in male tissues.

It is found in the secreted. Modulates blood feeding of female mosquitoes on vertebrate species by binding and sequestering different mediators involved in the host response. Binds serotonin and histamine. Increases blood clotting time. In Anopheles gambiae (African malaria mosquito), this protein is Short form salivary protein D7R1.